The sequence spans 549 residues: Sorting nexin-33 (549 aa).

The SH3 domain maps to 1 to 61 (MALKARALYS…PASYVEILRP (61 aa)). The span at 66-83 (VQVDYSGHTQGYTDSPHQ) shows a compositional bias: polar residues. A disordered region spans residues 66-137 (VQVDYSGHTQ…RPEYTHRPRP (72 aa)). The span at 86 to 101 (YDDDEEDDDDWDDWDD) shows a compositional bias: acidic residues. A compositionally biased stretch (polar residues) spans 110–119 (SGSNGVSRSQ). Over residues 127-137 (PRPEYTHRPRP) the composition is skewed to basic and acidic residues. The region spanning 205 to 315 (FSCSVEEPTK…HFLSCQDEKQ (111 aa)) is the PX domain. The region spanning 346–549 (LQDVEERVDV…EKTLHMYDDL (204 aa)) is the BAR domain.

It belongs to the sorting nexin family.

It localises to the cytoplasm. The protein resides in the cytosol. Its subcellular location is the membrane. It is found in the cytoplasmic vesicle membrane. In terms of biological role, plays a role in the reorganization of the cytoskeleton, endocytosis and cellular vesicle trafficking, both during interphase and at the end of mitotic cell divisions. Required for efficient progress through mitosis and cytokinesis. Required for normal formation of the cleavage furrow at the end of mitosis. Modulates endocytosis of cell-surface proteins. Promotes membrane tubulation (in vitro). May promote the formation of macropinosomes. In Xenopus tropicalis (Western clawed frog), this protein is Sorting nexin-33 (snx33).